A 235-amino-acid polypeptide reads, in one-letter code: Small ribosomal subunit protein uS3 (235 aa).

The region spanning 39–107 (IREILHKELK…DVVINIVEIR (69 aa)) is the KH type-2 domain. The interval 215-235 (QDKRMAESDGGGSSRPRRDAA) is disordered.

This sequence belongs to the universal ribosomal protein uS3 family. As to quaternary structure, part of the 30S ribosomal subunit. Forms a tight complex with proteins S10 and S14.

Its function is as follows. Binds the lower part of the 30S subunit head. Binds mRNA in the 70S ribosome, positioning it for translation. The polypeptide is Small ribosomal subunit protein uS3 (Rhodopseudomonas palustris (strain TIE-1)).